The following is a 398-amino-acid chain: Cysteine protease ATG4A (398 aa).

C77 serves as the catalytic Nucleophile. Catalysis depends on residues D279 and H281. An LIR motif is present at residues 393-396 (FEIL).

It belongs to the peptidase C54 family. As to quaternary structure, interacts with ATG9A; the interaction is direct.

It is found in the cytoplasm. It carries out the reaction [protein]-C-terminal L-amino acid-glycyl-phosphatidylethanolamide + H2O = [protein]-C-terminal L-amino acid-glycine + a 1,2-diacyl-sn-glycero-3-phosphoethanolamine. Inhibited by N-ethylmaleimide. Redox-regulated during autophagy since reducing conditions activate ATG4A whereas an oxidizing environment such as the presence of H(2)O(2) inhibits its activity. Cysteine protease that plays a key role in autophagy by mediating both proteolytic activation and delipidation of ATG8 family proteins. The protease activity is required for proteolytic activation of ATG8 family proteins: cleaves the C-terminal amino acid of ATG8 proteins to reveal a C-terminal glycine. Exposure of the glycine at the C-terminus is essential for ATG8 proteins conjugation to phosphatidylethanolamine (PE) and insertion to membranes, which is necessary for autophagy. Preferred substrate is GABARAPL2 followed by MAP1LC3A and GABARAP. Protease activity is also required to counteract formation of high-molecular weight conjugates of ATG8 proteins (ATG8ylation): acts as a deubiquitinating-like enzyme that removes ATG8 conjugated to other proteins, such as ATG3. In addition to the protease activity, also mediates delipidation of ATG8 family proteins. Catalyzes delipidation of PE-conjugated forms of ATG8 proteins during macroautophagy. Compared to ATG4B, the major protein for proteolytic activation of ATG8 proteins, shows weaker ability to cleave the C-terminal amino acid of ATG8 proteins, while it displays stronger delipidation activity. Involved in phagophore growth during mitophagy independently of its protease activity and of ATG8 proteins: acts by regulating ATG9A trafficking to mitochondria and promoting phagophore-endoplasmic reticulum contacts during the lipid transfer phase of mitophagy. Its function is as follows. (Microbial infection) Mediates cleavage of an ATG8 protein homolog coded in the genome of cytopathogenic bovine viral diarrhea virus (BVDV). The chain is Cysteine protease ATG4A from Bos taurus (Bovine).